The sequence spans 309 residues: MKNKTVLTEFILLGLTDVPELQVAVFTFLFLAYLLSILGNLTILILTLLDSHLQTPMYFFLRNFSFLEISFTNIFIPRVLISITTGNKSISFAGCFTQYFFAMFLGATEFYLLAAMSYDRYVAICKPLHYTTIMSSRICIQLIFCSWLGGLMAIIPTITLMSQQDFCASNRLNHYFCDYEPLLELSCSDTSLIEKVVFLVASVTLVVTLVLVILSYAFIIKTILKLPSAQQRTKAFSTCSSHMIVISLSYGSCMFMYINPSAKEGDTFNKGVALLITSVAPLLNPFIYTLRNQQVKQPFKDMVKKLLNL.

The Extracellular segment spans residues Met1–Val23. An N-linked (GlcNAc...) asparagine glycan is attached at Asn3. Residues Ala24–Thr47 form a helical membrane-spanning segment. The Cytoplasmic portion of the chain corresponds to Leu48 to Thr55. A helical transmembrane segment spans residues Pro56 to Pro77. At Arg78–Gln98 the chain is on the extracellular side. An N-linked (GlcNAc...) asparagine glycan is attached at Asn87. Cys95 and Cys187 are joined by a disulfide. Residues Tyr99–Tyr118 form a helical membrane-spanning segment. At Asp119–Arg137 the chain is on the cytoplasmic side. The helical transmembrane segment at Ile138–Pro156 threads the bilayer. Over Thr157–Ile193 the chain is Extracellular. Residues Glu194–Ala217 traverse the membrane as a helical segment. At Phe218–Lys234 the chain is on the cytoplasmic side. Residues Ala235–Tyr257 traverse the membrane as a helical segment. Residues Ile258–Lys270 are Extracellular-facing. Residues Gly271–Leu290 traverse the membrane as a helical segment. Topologically, residues Arg291–Leu309 are cytoplasmic.

It belongs to the G-protein coupled receptor 1 family.

The protein resides in the cell membrane. Its function is as follows. Odorant receptor. This Homo sapiens (Human) protein is Olfactory receptor 2AP1 (OR2AP1).